Here is a 144-residue protein sequence, read N- to C-terminus: 3-dehydroquinate dehydratase (144 aa).

Y22 acts as the Proton acceptor in catalysis. Substrate contacts are provided by N73, H79, and D86. Residue H99 is the Proton donor of the active site. Substrate is bound by residues 100–101 (LS) and R110.

Belongs to the type-II 3-dehydroquinase family. In terms of assembly, homododecamer.

The catalysed reaction is 3-dehydroquinate = 3-dehydroshikimate + H2O. It participates in metabolic intermediate biosynthesis; chorismate biosynthesis; chorismate from D-erythrose 4-phosphate and phosphoenolpyruvate: step 3/7. In terms of biological role, catalyzes a trans-dehydration via an enolate intermediate. The sequence is that of 3-dehydroquinate dehydratase from Trichlorobacter lovleyi (strain ATCC BAA-1151 / DSM 17278 / SZ) (Geobacter lovleyi).